A 341-amino-acid polypeptide reads, in one-letter code: Annexin A1 isoform p35 (341 aa).

4 Annexin repeats span residues 37 to 108 (FDPS…ALLK), 109 to 180 (TPAQ…SLAK), 192 to 263 (ELAE…ALVK), and 267 to 338 (SKPA…ALCG).

Belongs to the annexin family. Post-translationally, in contrast to mammalian homologs, does not contain a tyrosine phosphorylation site in the N-terminal part.

It localises to the nucleus. Its subcellular location is the cytoplasm. The protein resides in the cell projection. The protein localises to the cilium. It is found in the basolateral cell membrane. In terms of biological role, calcium/phospholipid-binding protein which promotes membrane fusion and is involved in exocytosis. This protein regulates phospholipase A2 activity. It seems to bind from two to four calcium ions with high affinity. The chain is Annexin A1 isoform p35 (CP35) from Columba livia (Rock dove).